The sequence spans 836 residues: Serine/threonine-protein kinase ATG1 (836 aa).

Residues 21 to 321 (YTVEKEIGKG…FNEFFNNEVV (301 aa)) enclose the Protein kinase domain. Residues 27–35 (IGKGSFAIV) and Lys50 each bind ATP. Asp168 acts as the Proton acceptor in catalysis. Disordered regions lie at residues 387 to 425 (EHYR…GQTR), 458 to 489 (NNGP…GGRR), and 619 to 642 (CAID…TPGA). A compositionally biased stretch (low complexity) spans 395 to 404 (LQGQQQQQQQ). Polar residues-rich tracts occupy residues 411–425 (RGST…GQTR), 459–468 (NGPTTNNQGA), and 630–640 (GNPSSNQTLTP). An interaction with ATG13 region spans residues 571–836 (ITPFVESLSA…RLKALKSKMS (266 aa)).

This sequence belongs to the protein kinase superfamily. Ser/Thr protein kinase family. APG1/unc-51/ULK1 subfamily. Homodimer. Dimerization requires the presence of ATG13. Forms a ternary complex with ATG13 and ATG17.

Its subcellular location is the cytoplasm. The protein localises to the preautophagosomal structure membrane. The enzyme catalyses L-seryl-[protein] + ATP = O-phospho-L-seryl-[protein] + ADP + H(+). It carries out the reaction L-threonyl-[protein] + ATP = O-phospho-L-threonyl-[protein] + ADP + H(+). Serine/threonine protein kinase involved in the cytoplasm to vacuole transport (Cvt) and found to be essential in autophagy, where it is required for the formation of autophagosomes. Involved in the clearance of protein aggregates which cannot be efficiently cleared by the proteasome. Required for selective autophagic degradation of the nucleus (nucleophagy) as well as for mitophagy which contributes to regulate mitochondrial quantity and quality by eliminating the mitochondria to a basal level to fulfill cellular energy requirements and preventing excess ROS production. Also involved in endoplasmic reticulum-specific autophagic process, in selective removal of ER-associated degradation (ERAD) substrates. Plays a key role in ATG9 and ATG23 cycling through the pre-autophagosomal structure and is necessary to promote ATG18 binding to ATG9 through phosphorylation of ATG9. Catalyzes phosphorylation of ATG4, decreasing the interaction between ATG4 and ATG8 and impairing deconjugation of PE-conjugated forms of ATG8. The protein is Serine/threonine-protein kinase ATG1 of Kluyveromyces marxianus (strain DMKU3-1042 / BCC 29191 / NBRC 104275) (Yeast).